The primary structure comprises 398 residues: Dual-specificity RNA methyltransferase RlmN (398 aa).

Glu-119 functions as the Proton acceptor in the catalytic mechanism. The region spanning 125 to 364 (EADRATLCVS…TIVRKTRGDD (240 aa)) is the Radical SAM core domain. A disulfide bridge connects residues Cys-132 and Cys-369. Residues Cys-139, Cys-143, and Cys-146 each contribute to the [4Fe-4S] cluster site. Residues 193-194 (GE), Ser-225, 247-249 (SLH), and Asn-326 contribute to the S-adenosyl-L-methionine site. The S-methylcysteine intermediate role is filled by Cys-369.

The protein belongs to the radical SAM superfamily. RlmN family. [4Fe-4S] cluster serves as cofactor.

The protein resides in the cytoplasm. It carries out the reaction adenosine(2503) in 23S rRNA + 2 reduced [2Fe-2S]-[ferredoxin] + 2 S-adenosyl-L-methionine = 2-methyladenosine(2503) in 23S rRNA + 5'-deoxyadenosine + L-methionine + 2 oxidized [2Fe-2S]-[ferredoxin] + S-adenosyl-L-homocysteine. It catalyses the reaction adenosine(37) in tRNA + 2 reduced [2Fe-2S]-[ferredoxin] + 2 S-adenosyl-L-methionine = 2-methyladenosine(37) in tRNA + 5'-deoxyadenosine + L-methionine + 2 oxidized [2Fe-2S]-[ferredoxin] + S-adenosyl-L-homocysteine. Specifically methylates position 2 of adenine 2503 in 23S rRNA and position 2 of adenine 37 in tRNAs. m2A2503 modification seems to play a crucial role in the proofreading step occurring at the peptidyl transferase center and thus would serve to optimize ribosomal fidelity. This chain is Dual-specificity RNA methyltransferase RlmN, found in Yersinia pestis.